The chain runs to 346 residues: Histidinol-phosphate aminotransferase (346 aa).

At Lys-209 the chain carries N6-(pyridoxal phosphate)lysine.

It belongs to the class-II pyridoxal-phosphate-dependent aminotransferase family. Histidinol-phosphate aminotransferase subfamily. Homodimer. It depends on pyridoxal 5'-phosphate as a cofactor.

The catalysed reaction is L-histidinol phosphate + 2-oxoglutarate = 3-(imidazol-4-yl)-2-oxopropyl phosphate + L-glutamate. It participates in amino-acid biosynthesis; L-histidine biosynthesis; L-histidine from 5-phospho-alpha-D-ribose 1-diphosphate: step 7/9. The sequence is that of Histidinol-phosphate aminotransferase from Flavobacterium psychrophilum (strain ATCC 49511 / DSM 21280 / CIP 103535 / JIP02/86).